Here is a 674-residue protein sequence, read N- to C-terminus: Probable copper-transporting P-type ATPase B (674 aa).

The segment at 1 to 22 (MNHSNQMHHDNHESHNHHSGHA) is disordered. Positions 7–16 (MHHDNHESHN) are enriched in basic and acidic residues. A run of 6 helical transmembrane segments spans residues 32–52 (FFVS…MGIN), 57–77 (FTFP…FFYG), 95–115 (GMMT…LYAF), 127–147 (TMDF…GHWI), 284–304 (GYLF…WMLI), and 315–335 (LVTV…PLVT). Residue Asp367 is the 4-aspartylphosphate intermediate of the active site. Mg(2+) contacts are provided by Asp565 and Asp569. The next 2 membrane-spanning stretches (helical) occupy residues 623-645 (LWWG…AFVG) and 649-671 (SPAV…AFTL).

Belongs to the cation transport ATPase (P-type) (TC 3.A.3) family. Type IB subfamily.

The protein resides in the cell membrane. It carries out the reaction Cu(+)(in) + ATP + H2O = Cu(+)(out) + ADP + phosphate + H(+). Its function is as follows. Involved in copper transport. In Staphylococcus epidermidis (strain ATCC 12228 / FDA PCI 1200), this protein is Probable copper-transporting P-type ATPase B (copB).